Consider the following 84-residue polypeptide: Defensin-like protein 116 (84 aa).

Positions 1 to 24 (MAITKNMLVVLLLTIIFVTSSVHC) are cleaved as a signal peptide. Cystine bridges form between Cys40–Cys80, Cys46–Cys71, Cys55–Cys78, and Cys59–Cys79.

Belongs to the DEFL family.

Its subcellular location is the secreted. The sequence is that of Defensin-like protein 116 from Arabidopsis thaliana (Mouse-ear cress).